The chain runs to 175 residues: Sialidase 85-1.3 (175 aa).

The protein belongs to the glycosyl hydrolase 33 family.

The enzyme catalyses Hydrolysis of alpha-(2-&gt;3)-, alpha-(2-&gt;6)-, alpha-(2-&gt;8)- glycosidic linkages of terminal sialic acid residues in oligosaccharides, glycoproteins, glycolipids, colominic acid and synthetic substrates.. Its function is as follows. Developmentally regulated neuraminidase implicated in parasite invasion of cells. May contribute to the pathology during T.cruzi infection by cleaving sialic acid from cells of the immune system. This chain is Sialidase 85-1.3 (SA85-1.3), found in Trypanosoma cruzi.